The chain runs to 838 residues: Leucine--tRNA ligase (838 aa).

Residues 36–46 (PYPSGKIHMGH) carry the 'HIGH' region motif. A 'KMSKS' region motif is present at residues 611–615 (KMSKS). K614 contacts ATP.

The protein belongs to the class-I aminoacyl-tRNA synthetase family.

The protein localises to the cytoplasm. It catalyses the reaction tRNA(Leu) + L-leucine + ATP = L-leucyl-tRNA(Leu) + AMP + diphosphate. This is Leucine--tRNA ligase from Wolbachia pipientis wMel.